A 123-amino-acid polypeptide reads, in one-letter code: Defensin beta 118 (123 aa).

A signal peptide spans 1 to 19 (MKLLLLALPMLVLLPQVIP). Disulfide bonds link Cys27-Cys54, Cys34-Cys48, and Cys38-Cys55. Disordered stretches follow at residues 59–79 (NEDH…STPG) and 102–123 (MVEE…HHSS). A propeptide spanning residues 64–123 (QVPTTSPTPLSDSTPGSIDDILTVRFTTDYFEVSSKKDMVEESEAGWGTQTSLPDVHHSS) is cleaved from the precursor. Low complexity predominate over residues 66–79 (PTTSPTPLSDSTPG).

The protein belongs to the beta-defensin family. The three-dimensional structure formed by the three intramolecular disulfide bridges is indispensable for antimicrobial activity.

It localises to the secreted. In terms of biological role, host defense peptide that exhibits antimicrobial activity against both Gram-negative bacteria, such as E.coli and S.typhimurium, and Gram-positive bacteria, such as S.aureus and B.subtilis. Inhibits cell adhesion of E.coli on intestinal epithelial enterocytes. Causes rapid permeabilization of both the outer and inner membrane of E.coli, leading to morphological alterations on the bacterial surface. Binds to bacterial lipopolysaccharides (LPS) with high affinity, and may thereby be involved in immunoregulation through LPS neutralization. May contribute to epididymal innate immunity and protect the sperm against attack by microorganisms. The polypeptide is Defensin beta 118 (DEFB118) (Hylobates lar (Lar gibbon)).